The chain runs to 524 residues: MIRRAPFLILLRFCRMGKMACSGYPPFQGRIVLSEMPAHRLAALIRSKEVSALEVAESFIDNIEASDSRICAFLYTDFSYTRDVARRVDEELKSATKLSPLAGVPIAVKDMILTRDMPTTAGSKILEGWIPPYNATVIERISRARMPILGKTNQDEFGMGSSTEYSAYKTTRNPWDLSRTAGGSGGGSSAAVSASQAPLALGTDTGGSIRLPAHCTGTVGIRPTYGSVSRYGVIALASSFDQVGPCSSNILDAALLHEVIAGYDPADAVSIKDQDLNFSQAAYEGANRGISGVRLGFVNPSNWCNSKITDLFGRTLKSLESEGAVLHEVQFPNFDHAVQAYYLIMQAEASSNLSRYDSIRFGPQEMAASASGTVSKTRSIRFGPEVKRRILLGTHILSAGYYDDFYMSAQKIRSLVKRDFAKIFSLVDVLLLPTAPTPAFKLGEKIDHHTSMYKSDTATTPASLAGLPAGSIPMGVIDGLPVGLQIIAPGQFDSRVYSTGAAIEQIIGDIHAMKNTKHNTGQTA.

Catalysis depends on charge relay system residues K109 and S184. The Acyl-ester intermediate role is filled by S208.

Belongs to the amidase family. GatA subfamily. Heterotrimer of A, B and C subunits.

It carries out the reaction L-glutamyl-tRNA(Gln) + L-glutamine + ATP + H2O = L-glutaminyl-tRNA(Gln) + L-glutamate + ADP + phosphate + H(+). Its function is as follows. Allows the formation of correctly charged Gln-tRNA(Gln) through the transamidation of misacylated Glu-tRNA(Gln) in organisms which lack glutaminyl-tRNA synthetase. The reaction takes place in the presence of glutamine and ATP through an activated gamma-phospho-Glu-tRNA(Gln). The polypeptide is Glutamyl-tRNA(Gln) amidotransferase subunit A (Tropheryma whipplei (strain TW08/27) (Whipple's bacillus)).